The sequence spans 198 residues: Imidazoleglycerol-phosphate dehydratase (198 aa).

This sequence belongs to the imidazoleglycerol-phosphate dehydratase family.

The protein localises to the cytoplasm. It catalyses the reaction D-erythro-1-(imidazol-4-yl)glycerol 3-phosphate = 3-(imidazol-4-yl)-2-oxopropyl phosphate + H2O. It participates in amino-acid biosynthesis; L-histidine biosynthesis; L-histidine from 5-phospho-alpha-D-ribose 1-diphosphate: step 6/9. The chain is Imidazoleglycerol-phosphate dehydratase from Magnetococcus marinus (strain ATCC BAA-1437 / JCM 17883 / MC-1).